The sequence spans 277 residues: MIOREX complex component 2 (277 aa).

The protein belongs to the NAD(P)-dependent epimerase/dehydratase family. As to quaternary structure, associates with the mitochondrial ribosome. Component of a multi-subunit COQ enzyme complex.

The protein resides in the mitochondrion. It functions in the pathway cofactor biosynthesis; ubiquinone biosynthesis. Functionally, component of MIOREX complexes, large expressome-like assemblies of ribosomes with factors involved in all the steps of post-transcriptional gene expression. Component of a multi-subunit COQ enzyme complex required for coenzyme Q biosynthesis. This Saccharomyces cerevisiae (strain ATCC 204508 / S288c) (Baker's yeast) protein is MIOREX complex component 2.